Consider the following 61-residue polypeptide: Large ribosomal subunit protein uL30 (61 aa).

Belongs to the universal ribosomal protein uL30 family. As to quaternary structure, part of the 50S ribosomal subunit.

This is Large ribosomal subunit protein uL30 from Corynebacterium diphtheriae (strain ATCC 700971 / NCTC 13129 / Biotype gravis).